We begin with the raw amino-acid sequence, 164 residues long: Neurotrophin-3 (164 aa).

The N-terminal stretch at 1-3 (IQS) is a signal peptide. The propeptide occupies 4–120 (TNMDQQGSLT…ALNRTSRRKR (117 aa)). An N-linked (GlcNAc...) asparagine glycan is attached at N113.

It belongs to the NGF-beta family.

The protein resides in the secreted. In terms of biological role, seems to promote the survival of visceral and proprioceptive sensory neurons. This is Neurotrophin-3 (NTF3) from Sanzinia madagascariensis (Madagascar tree boa).